Reading from the N-terminus, the 281-residue chain is NAD kinase (281 aa).

Asp61 acts as the Proton acceptor in catalysis. Residues 61–62, 134–135, Arg145, Asp164, 175–180, and Gln234 each bind NAD(+); these read DG, ND, and TAYSLS.

This sequence belongs to the NAD kinase family. It depends on a divalent metal cation as a cofactor.

The protein resides in the cytoplasm. The enzyme catalyses NAD(+) + ATP = ADP + NADP(+) + H(+). Functionally, involved in the regulation of the intracellular balance of NAD and NADP, and is a key enzyme in the biosynthesis of NADP. Catalyzes specifically the phosphorylation on 2'-hydroxyl of the adenosine moiety of NAD to yield NADP. The polypeptide is NAD kinase (Clostridium botulinum (strain 657 / Type Ba4)).